We begin with the raw amino-acid sequence, 313 residues long: MTEKQRIVFAGTPEFARITLAELRQGPEAVVGVFTQPDRPAGRGRTLQASPVKQEALAAGIPVFQPESCKTGEALELLRSLAPDLLIVVAYGQILPQAILALPTRGAINVHASLLPAWRGAAPIARAIAAGDKESGVAIMQMEAGLDSGPVLWEERLPIAADDTAASLHDRLARLGGKALRHVLDDLWAERLKPVPQDPALVTYAHKLKKEEALLDWRLPAATLERLVRAFNPSPVAHTLFRDKGLRVWQARVLGAGGDQAPGSISAVEKDGVVVTCGEDRLQLLAVQPAGKGVLSGSDFARGYRPQVGEVLG.

113-116 (SLLP) is a binding site for (6S)-5,6,7,8-tetrahydrofolate.

This sequence belongs to the Fmt family.

It catalyses the reaction L-methionyl-tRNA(fMet) + (6R)-10-formyltetrahydrofolate = N-formyl-L-methionyl-tRNA(fMet) + (6S)-5,6,7,8-tetrahydrofolate + H(+). Attaches a formyl group to the free amino group of methionyl-tRNA(fMet). The formyl group appears to play a dual role in the initiator identity of N-formylmethionyl-tRNA by promoting its recognition by IF2 and preventing the misappropriation of this tRNA by the elongation apparatus. This chain is Methionyl-tRNA formyltransferase, found in Acidithiobacillus ferrooxidans (strain ATCC 23270 / DSM 14882 / CIP 104768 / NCIMB 8455) (Ferrobacillus ferrooxidans (strain ATCC 23270)).